The following is a 487-amino-acid chain: Protein nucleotidyltransferase YdiU (487 aa).

ATP contacts are provided by Gly90, Gly92, Arg93, Lys113, Asp125, Gly126, Arg176, and Arg183. Asp252 serves as the catalytic Proton acceptor. Residues Asn253 and Asp262 each coordinate Mg(2+). Asp262 provides a ligand contact to ATP.

Belongs to the SELO family. The cofactor is Mg(2+). Requires Mn(2+) as cofactor.

The enzyme catalyses L-seryl-[protein] + ATP = 3-O-(5'-adenylyl)-L-seryl-[protein] + diphosphate. It catalyses the reaction L-threonyl-[protein] + ATP = 3-O-(5'-adenylyl)-L-threonyl-[protein] + diphosphate. It carries out the reaction L-tyrosyl-[protein] + ATP = O-(5'-adenylyl)-L-tyrosyl-[protein] + diphosphate. The catalysed reaction is L-histidyl-[protein] + UTP = N(tele)-(5'-uridylyl)-L-histidyl-[protein] + diphosphate. The enzyme catalyses L-seryl-[protein] + UTP = O-(5'-uridylyl)-L-seryl-[protein] + diphosphate. It catalyses the reaction L-tyrosyl-[protein] + UTP = O-(5'-uridylyl)-L-tyrosyl-[protein] + diphosphate. Functionally, nucleotidyltransferase involved in the post-translational modification of proteins. It can catalyze the addition of adenosine monophosphate (AMP) or uridine monophosphate (UMP) to a protein, resulting in modifications known as AMPylation and UMPylation. The polypeptide is Protein nucleotidyltransferase YdiU (Ectopseudomonas mendocina (strain ymp) (Pseudomonas mendocina)).